A 192-amino-acid polypeptide reads, in one-letter code: LexA repressor (192 aa).

Residues 15 to 35 constitute a DNA-binding region (H-T-H motif); that stretch reads RAEIARELGFRSANAAEEHLK. Residues serine 109 and lysine 146 each act as for autocatalytic cleavage activity in the active site.

This sequence belongs to the peptidase S24 family. As to quaternary structure, homodimer.

It carries out the reaction Hydrolysis of Ala-|-Gly bond in repressor LexA.. Represses a number of genes involved in the response to DNA damage (SOS response), including recA and lexA. In the presence of single-stranded DNA, RecA interacts with LexA causing an autocatalytic cleavage which disrupts the DNA-binding part of LexA, leading to derepression of the SOS regulon and eventually DNA repair. The protein is LexA repressor of Photobacterium profundum (strain SS9).